Here is a 340-residue protein sequence, read N- to C-terminus: Toxin coregulated pilus biosynthesis protein E (340 aa).

A run of 3 helical transmembrane segments spans residues 108-131 (AISS…GYSV), 146-161 (WPGV…FSLY), and 312-333 (NISL…FSLV).

It belongs to the GSP F family.

The protein localises to the cell inner membrane. In terms of biological role, probably involved in cholera toxin receptor (GM1) interaction in order to bring the cells within close proximity of the ganglioside for efficient toxin delivery. This chain is Toxin coregulated pilus biosynthesis protein E (tcpE), found in Vibrio cholerae serotype O1 (strain ATCC 39315 / El Tor Inaba N16961).